Here is a 401-residue protein sequence, read N- to C-terminus: Homocysteine-responsive endoplasmic reticulum-resident ubiquitin-like domain member 2 protein (401 aa).

Residues 10–89 form the Ubiquitin-like domain; sequence VTLIIKAPNQ…HMVHLVCASR (80 aa). The tract at residues 87–137 is disordered; the sequence is ASRSPPSSPKSSTDGESHGALASSTNSNSDHSDSTTPSPSQESLSLVAGSS. Low complexity-rich tracts occupy residues 88-98 and 109-126; these read SRSPPSSPKSS and SSTNSNSDHSDSTTPSPS. A helical transmembrane segment spans residues 299 to 319; it reads FIMVMGAMLLVYLHQAGWFPF.

The protein localises to the membrane. Its function is as follows. Could be involved in the unfolded protein response (UPR) pathway. The sequence is that of Homocysteine-responsive endoplasmic reticulum-resident ubiquitin-like domain member 2 protein (Herpud2) from Rattus norvegicus (Rat).